A 108-amino-acid polypeptide reads, in one-letter code: DNA-directed RNA polymerase III subunit RPC10 (108 aa).

6 residues coordinate Zn(2+): C5, C8, C25, C28, C69, and C72. Residues 5–28 form a C4-type zinc finger; the sequence is CPGCGNGLIVEEGQRCHRFACNTC. Residues 65 to 107 form a TFIIS-type zinc finger; it reads TAEPCPKCEHPRAYFMQLQTRSADEPMTTFYKCCNAQCGHRWR. The Hairpin signature appears at 88–89; that stretch reads DE. Zn(2+) is bound by residues C98 and C102.

The protein belongs to the archaeal RpoM/eukaryotic RPA12/RPB9/RPC11 RNA polymerase family. In terms of assembly, component of the RNA polymerase III complex consisting of 17 subunits: a ten-subunit horseshoe-shaped catalytic core composed of POLR3A/RPC1, POLR3B/RPC2, POLR1C/RPAC1, POLR1D/RPAC2, POLR3K/RPC10, POLR2E/RPABC1, POLR2F/RPABC2, POLR2H/RPABC3, POLR2K/RPABC4 and POLR2L/RPABC5; a mobile stalk composed of two subunits POLR3H/RPC8 and CRCP/RPC9, protruding from the core and functioning primarily in transcription initiation; and additional subunits homologous to general transcription factors of the RNA polymerase II machinery, POLR3C/RPC3-POLR3F/RPC6-POLR3G/RPC7 heterotrimer required for transcription initiation and POLR3D/RPC4-POLR3E/RPC5 heterodimer involved in both transcription initiation and termination.

It is found in the nucleus. In terms of biological role, core component of RNA polymerase III (Pol III) which synthesizes small non-coding RNAs using the four ribonucleoside triphosphates as substrates. Can mediate Pol I proofreading of the nascent RNA transcript. Anchors into the Pol III active site to constantly monitor transcription fidelity, cleaves mis-incorporated 5'-ribonucleotides and restarts the transcription process. Once Pol III reaches the poly(dT) termination signal, can induce Pol III clamp opening and transcription termination. Pol III plays an important role in sensing and limiting infection by intracellular bacteria and DNA viruses. Acts as a nuclear and cytosolic DNA sensor involved in innate immune response. Can sense non-self dsDNA that serves as template for transcription into dsRNA. The non-self RNA polymerase III transcripts, such as Epstein-Barr virus-encoded RNAs (EBERs) induce type I interferon and NF-kappa-B through the RIG-I pathway. In Mus musculus (Mouse), this protein is DNA-directed RNA polymerase III subunit RPC10.